A 562-amino-acid polypeptide reads, in one-letter code: Protein FAM222B (562 aa).

Low complexity-rich tracts occupy residues 147–167 (PQAQALARQQALQHAQTLAHA) and 183–201 (ALSHPQSLQQPQGLGHPQQ). Disordered regions lie at residues 147–242 (PQAQ…PPNV) and 537–562 (AHRAPGTRAPDPTDSRSLHIQHPGYR).

This sequence belongs to the FAM222 family.

The protein is Protein FAM222B (Fam222b) of Mus musculus (Mouse).